Here is a 140-residue protein sequence, read N- to C-terminus: L-fucose mutarotase (140 aa).

The Proton donor role is filled by His22. Residues Asp30, Arg107, and 129–131 each bind substrate; that span reads YGN.

The protein belongs to the RbsD / FucU family. FucU mutarotase subfamily. As to quaternary structure, homodecamer.

The protein localises to the cytoplasm. The catalysed reaction is alpha-L-fucose = beta-L-fucose. Its pathway is carbohydrate metabolism; L-fucose metabolism. In terms of biological role, involved in the anomeric conversion of L-fucose. The sequence is that of L-fucose mutarotase from Salmonella typhimurium (strain LT2 / SGSC1412 / ATCC 700720).